Reading from the N-terminus, the 100-residue chain is MGALTKADMAERLFEELGLNKREAKEMVEMFFEEIRHSLEDNIPVKLSGFGNFDLRDKSERPGRNPKTGEEIPITARRVVTFRPGQKLKQRVEAYAGTKS.

The protein belongs to the bacterial histone-like protein family. In terms of assembly, heterodimer of an alpha and a beta chain.

In terms of biological role, this protein is one of the two subunits of integration host factor, a specific DNA-binding protein that functions in genetic recombination as well as in transcriptional and translational control. This Alcanivorax borkumensis (strain ATCC 700651 / DSM 11573 / NCIMB 13689 / SK2) protein is Integration host factor subunit alpha.